The chain runs to 518 residues: Golgi-associated olfactory signaling regulator (518 aa).

A signal peptide spans 1–19 (MKSFSRILFLVFLLAGLRS). Over 20-409 (KAAPSAPLPL…GRPRGAAGGA (390 aa)) the chain is Extracellular. Residues 38–377 (HPSETSPLKG…ATLRAPQRHS (340 aa)) are disordered. A compositionally biased stretch (basic and acidic residues) spans 92–106 (DLRETPHPESPETPK). A glycan (N-linked (GlcNAc...) asparagine) is linked at Asn-124. Pro residues predominate over residues 138–153 (TPGPTEMPHPGSPETP). N-linked (GlcNAc...) asparagine glycosylation is present at Asn-156. 2 stretches are compositionally biased toward polar residues: residues 168-180 (TPNT…TPQE) and 187-207 (LNAT…NPTK). 2 N-linked (GlcNAc...) asparagine glycosylation sites follow: Asn-188 and Asn-220. 2 stretches are compositionally biased toward basic and acidic residues: residues 209-220 (PDPKSPEKHDLN) and 236-247 (DPSKTPHPESHV). Polar residues-rich tracts occupy residues 248–270 (THNP…QNAT) and 276–285 (SDPQISTSLY). A glycan (N-linked (GlcNAc...) asparagine) is linked at Asn-268. Residues 410-430 (LCLFFAGTALLIGIFVLLWCL) form a helical membrane-spanning segment. Topologically, residues 431 to 518 (YRRAARQRPF…SPATLPNNFV (88 aa)) are cytoplasmic. Residues 477-518 (HIATKQPPPTPPLPPKLPPPPRGGRPQRLEALSPATLPNNFV) form a disordered region. Over residues 482-499 (QPPPTPPLPPKLPPPPRG) the composition is skewed to pro residues.

The protein resides in the golgi apparatus membrane. In terms of biological role, required for proper function of the olfactory system. May be involved in establishing the acuity of olfactory sensory signaling. The chain is Golgi-associated olfactory signaling regulator (GFY) from Homo sapiens (Human).